A 131-amino-acid polypeptide reads, in one-letter code: Translation initiation factor 5A (131 aa).

Lysine 37 is subject to Hypusine.

The protein belongs to the eIF-5A family.

The protein localises to the cytoplasm. Functions by promoting the formation of the first peptide bond. In Methanococcus maripaludis (strain C5 / ATCC BAA-1333), this protein is Translation initiation factor 5A (eIF5A).